A 176-amino-acid polypeptide reads, in one-letter code: Inner membrane-spanning protein YciB (176 aa).

Helical transmembrane passes span 23 to 43 (MIAA…FLYW), 50 to 70 (TMQW…IVLG), 74 to 94 (FIMW…LGSH), 119 to 139 (LTYM…FVFT), and 150 to 170 (MFGS…YLST).

It belongs to the YciB family.

The protein localises to the cell inner membrane. Functionally, plays a role in cell envelope biogenesis, maintenance of cell envelope integrity and membrane homeostasis. The polypeptide is Inner membrane-spanning protein YciB (Neisseria gonorrhoeae (strain ATCC 700825 / FA 1090)).